Here is a 398-residue protein sequence, read N- to C-terminus: 2,3,4,5-tetrahydropyridine-2,6-dicarboxylate N-succinyltransferase (398 aa).

The active-site Acyl-anhydride intermediate is the glutamate 268. Succinyl-CoA-binding positions include arginine 270, glycine 285, serine 288, alanine 311, 326-327, glycine 334, lysine 361, and 374-377; these read DG and RQNS.

This sequence belongs to the type 2 tetrahydrodipicolinate N-succinyltransferase family. Homotrimer.

The protein resides in the cytoplasm. It catalyses the reaction (S)-2,3,4,5-tetrahydrodipicolinate + succinyl-CoA + H2O = (S)-2-succinylamino-6-oxoheptanedioate + CoA. It functions in the pathway amino-acid biosynthesis; L-lysine biosynthesis via DAP pathway; LL-2,6-diaminopimelate from (S)-tetrahydrodipicolinate (succinylase route): step 1/3. In terms of biological role, catalyzes the conversion of the cyclic tetrahydrodipicolinate (THDP) into the acyclic N-succinyl-L-2-amino-6-oxopimelate using succinyl-CoA. This is 2,3,4,5-tetrahydropyridine-2,6-dicarboxylate N-succinyltransferase from Sulfurimonas denitrificans (strain ATCC 33889 / DSM 1251) (Thiomicrospira denitrificans (strain ATCC 33889 / DSM 1251)).